Reading from the N-terminus, the 716-residue chain is DNA ligase (716 aa).

NAD(+) is bound by residues 47–51 (DATYD), 96–97 (SL), and Glu130. Lys132 functions as the N6-AMP-lysine intermediate in the catalytic mechanism. NAD(+) is bound by residues Arg153, Glu190, Lys306, and Lys330. 4 residues coordinate Zn(2+): Cys435, Cys438, Cys453, and Cys459. Residues 638-716 (RSDSAVAGKT…EDEWLKLIEG (79 aa)) form the BRCT domain.

The protein belongs to the NAD-dependent DNA ligase family. LigA subfamily. Mg(2+) is required as a cofactor. Mn(2+) serves as cofactor.

The enzyme catalyses NAD(+) + (deoxyribonucleotide)n-3'-hydroxyl + 5'-phospho-(deoxyribonucleotide)m = (deoxyribonucleotide)n+m + AMP + beta-nicotinamide D-nucleotide.. Its function is as follows. DNA ligase that catalyzes the formation of phosphodiester linkages between 5'-phosphoryl and 3'-hydroxyl groups in double-stranded DNA using NAD as a coenzyme and as the energy source for the reaction. It is essential for DNA replication and repair of damaged DNA. The chain is DNA ligase from Nitrobacter winogradskyi (strain ATCC 25391 / DSM 10237 / CIP 104748 / NCIMB 11846 / Nb-255).